The following is a 155-amino-acid chain: Small ribosomal subunit protein uS7c (155 aa).

Belongs to the universal ribosomal protein uS7 family. As to quaternary structure, part of the 30S ribosomal subunit.

The protein localises to the plastid. It localises to the chloroplast. In terms of biological role, one of the primary rRNA binding proteins, it binds directly to 16S rRNA where it nucleates assembly of the head domain of the 30S subunit. The polypeptide is Small ribosomal subunit protein uS7c (rps7) (Butomus umbellatus (Flowering rush)).